We begin with the raw amino-acid sequence, 231 residues long: Sugar fermentation stimulation protein homolog (231 aa).

The protein belongs to the SfsA family.

The chain is Sugar fermentation stimulation protein homolog from Geotalea uraniireducens (strain Rf4) (Geobacter uraniireducens).